The chain runs to 733 residues: Submandibular gland protein C (733 aa).

The first 20 residues, 1-20 (MKLILLYLAVVLCFVGKARS), serve as a signal peptide directing secretion. The interval 48–91 (KSSGGSKDYNLSDGGKSNSRKNLSPATGGSATQQSNLDDSHAPN) is disordered. N57 carries an N-linked (GlcNAc...) asparagine glycan. The span at 62–84 (GKSNSRKNLSPATGGSATQQSNL) shows a compositional bias: polar residues. N141 and N187 each carry an N-linked (GlcNAc...) asparagine glycan. Disordered regions lie at residues 172-204 (GQQA…ADKP), 249-330 (LTED…NSSN), 369-450 (LTED…NSSN), and 496-733 (SVTE…PSVA). The span at 186-199 (ENSSLSTGSATSNK) shows a compositional bias: polar residues. Residues 256–270 (TSTSASVSGDSSTSS) show a composition bias toward low complexity. The span at 300–318 (GSKQNVEDSTLSTGSATSN) shows a compositional bias: polar residues. Residue N327 is glycosylated (N-linked (GlcNAc...) asparagine). Over residues 376-390 (TSTSASVSGDSSTSS) the composition is skewed to low complexity. Polar residues predominate over residues 420-438 (GSKQNVEDSTLSTGSATSN). N-linked (GlcNAc...) asparagine glycans are attached at residues N447, N514, and N528. Composition is skewed to polar residues over residues 496 to 516 (SVTE…NNLS) and 525 to 535 (NPTNGSSSASS). Residues 538-552 (KPYEEGMRKLLKFLE) show a composition bias toward basic and acidic residues. 2 stretches are compositionally biased toward low complexity: residues 563 to 574 (SVSGMSSESSRS) and 609 to 619 (SSNSSTGSATS). N-linked (GlcNAc...) asparagine glycosylation occurs at N611. Residues 654 to 665 (GFNGPEGVGENN) are compositionally biased toward gly residues. The span at 677–701 (GSKSDSGSHNLSSGSGSRSNVSTGG) shows a compositional bias: low complexity. N686 and N696 each carry an N-linked (GlcNAc...) asparagine glycan. Positions 722 to 733 (TGKTQSGSPSVA) are enriched in polar residues.

N-glycosylated. As to expression, detected in terminal tubule cells of the submandibular gland (at protein level). Expressed in submandibular salivary glands of 3-day-old males but not adults. Expression in adult submandibular glands is restricted to females. Isoform 5 is expressed in both 3-day-old and adult sublingual glands.

It is found in the secreted. In Mus musculus (Mouse), this protein is Submandibular gland protein C (Muc19).